A 286-amino-acid polypeptide reads, in one-letter code: Nucleotide-binding protein HCH_05324 (286 aa).

An ATP-binding site is contributed by 8 to 15; that stretch reads GRSGSGKS. Position 60-63 (60-63) interacts with GTP; that stretch reads DARN.

This sequence belongs to the RapZ-like family.

Its function is as follows. Displays ATPase and GTPase activities. In Hahella chejuensis (strain KCTC 2396), this protein is Nucleotide-binding protein HCH_05324.